The following is a 218-amino-acid chain: rRNA methyltransferase 2, mitochondrial (218 aa).

S-adenosyl-L-methionine contacts are provided by residues 59–62 (PGSW), aspartate 80, 96–97 (DI), and aspartate 133. The Proton acceptor role is filled by lysine 173.

Belongs to the class I-like SAM-binding methyltransferase superfamily. RNA methyltransferase RlmE family.

The protein localises to the mitochondrion. The enzyme catalyses a uridine in 21S rRNA + S-adenosyl-L-methionine = a 2'-O-methyluridine in 21S rRNA + S-adenosyl-L-homocysteine + H(+). Functionally, S-adenosyl-L-methionine-dependent 2'-O-ribose methyltransferase that catalyzes the formation of the 2'-O-methyluridine corresponding to position 2791 in S.cerevisiae 21S mitochondrial large subunit ribosomal RNA (mtLSU rRNA), a universally conserved modification in the peptidyl transferase domain of the mtLSU rRNA. This is rRNA methyltransferase 2, mitochondrial from Schizosaccharomyces pombe (strain 972 / ATCC 24843) (Fission yeast).